A 169-amino-acid polypeptide reads, in one-letter code: 3-hydroxyanthranilate 3,4-dioxygenase (169 aa).

An O2-binding site is contributed by Arg-44. Positions 48, 54, and 92 each coordinate Fe cation. Residue Glu-54 coordinates substrate. Arg-96 and Glu-106 together coordinate substrate. Positions 121, 124, 158, and 160 each coordinate a divalent metal cation.

This sequence belongs to the 3-HAO family. The cofactor is Fe(2+).

The protein localises to the cytoplasm. It carries out the reaction 3-hydroxyanthranilate + O2 = (2Z,4Z)-2-amino-3-carboxymuconate 6-semialdehyde. It participates in cofactor biosynthesis; NAD(+) biosynthesis; quinolinate from L-kynurenine: step 3/3. In terms of biological role, catalyzes the oxidative ring opening of 3-hydroxyanthranilate to 2-amino-3-carboxymuconate semialdehyde, which spontaneously cyclizes to quinolinate. This is 3-hydroxyanthranilate 3,4-dioxygenase from Meyerozyma guilliermondii (strain ATCC 6260 / CBS 566 / DSM 6381 / JCM 1539 / NBRC 10279 / NRRL Y-324) (Yeast).